We begin with the raw amino-acid sequence, 231 residues long: LexA repressor (231 aa).

The H-T-H motif DNA-binding region spans 26-46; sequence FEEMKEALDLKSKSGIHRLIG. Residues Ser-152 and Lys-190 each act as for autocatalytic cleavage activity in the active site.

Belongs to the peptidase S24 family. Homodimer.

It catalyses the reaction Hydrolysis of Ala-|-Gly bond in repressor LexA.. Represses a number of genes involved in the response to DNA damage (SOS response), including recA and lexA. In the presence of single-stranded DNA, RecA interacts with LexA causing an autocatalytic cleavage which disrupts the DNA-binding part of LexA, leading to derepression of the SOS regulon and eventually DNA repair. This chain is LexA repressor, found in Acidiphilium cryptum (strain JF-5).